Here is a 372-residue protein sequence, read N- to C-terminus: Glutamate 5-kinase (372 aa).

Residue lysine 14 coordinates ATP. Positions 54, 141, and 153 each coordinate substrate. ATP is bound at residue 173–174 (TD). Positions 280–358 (RGTLVLDDGA…DAIEALLGYV (79 aa)) constitute a PUA domain.

The protein belongs to the glutamate 5-kinase family.

It is found in the cytoplasm. It catalyses the reaction L-glutamate + ATP = L-glutamyl 5-phosphate + ADP. Its pathway is amino-acid biosynthesis; L-proline biosynthesis; L-glutamate 5-semialdehyde from L-glutamate: step 1/2. Its function is as follows. Catalyzes the transfer of a phosphate group to glutamate to form L-glutamate 5-phosphate. The chain is Glutamate 5-kinase from Pseudomonas aeruginosa (strain UCBPP-PA14).